The sequence spans 484 residues: tRNA-2-methylthio-N(6)-dimethylallyladenosine synthase (484 aa).

The MTTase N-terminal domain occupies 29–149 (GVFHIHTLGC…LPKLLDQNRA (121 aa)). The [4Fe-4S] cluster site is built by Cys-38, Cys-78, Cys-112, Cys-186, Cys-190, and Cys-193. The Radical SAM core domain occupies 172–401 (RASRISSWVA…VALQEQITEE (230 aa)). The TRAM domain occupies 404 to 474 (ATFEGRDVEV…RHNLLADPDV (71 aa)).

It belongs to the methylthiotransferase family. MiaB subfamily. In terms of assembly, monomer. The cofactor is [4Fe-4S] cluster.

The protein resides in the cytoplasm. The enzyme catalyses N(6)-dimethylallyladenosine(37) in tRNA + (sulfur carrier)-SH + AH2 + 2 S-adenosyl-L-methionine = 2-methylsulfanyl-N(6)-dimethylallyladenosine(37) in tRNA + (sulfur carrier)-H + 5'-deoxyadenosine + L-methionine + A + S-adenosyl-L-homocysteine + 2 H(+). In terms of biological role, catalyzes the methylthiolation of N6-(dimethylallyl)adenosine (i(6)A), leading to the formation of 2-methylthio-N6-(dimethylallyl)adenosine (ms(2)i(6)A) at position 37 in tRNAs that read codons beginning with uridine. This is tRNA-2-methylthio-N(6)-dimethylallyladenosine synthase from Bifidobacterium longum (strain DJO10A).